The following is a 387-amino-acid chain: MSNDFLFTSESVSEGHPDKVADQISDAVLDAILAQDKYARVAAETLCNTGLVVLAGEITTTANVDYIQVARETIKRIGYDNTEYGIDYKGCAVLVAYDKQSPDIAQGVDRASDDYLNQGAGDQGLMFGYACDETPELMPFPIYYSHRLVERQSLLRRDGRLPWLRPDAKSQVTVRYVDGRPHSVDTVVLSTQHAPDISQAQIREAVIEEIIKPVLPAEMLKETKYLVNPTGRFVIGGPQGDCGLTGRKIIVDTYGGASPHGGGAFSGKDPSKVDRSAAYAARYVAKNVVAAGLARQCQVQVSYAIGVARPINVTVYTEGTGKISDEKIAALVQEHFDLRPKGIVQMLDLLRPIYEKTAAYGHFGREEPEFSWEATDKAAILRAAAGL.

Residue His-16 participates in ATP binding. Mg(2+) is bound at residue Asp-18. Glu-44 contributes to the K(+) binding site. Residues Glu-57 and Gln-100 each contribute to the L-methionine site. The segment at Gln-100–Arg-110 is flexible loop. Residues Asp-167 to Lys-169, Arg-232 to Phe-233, Asp-241, Arg-247 to Lys-248, Ala-264, and Lys-268 each bind ATP. Position 241 (Asp-241) interacts with L-methionine. Lys-272 lines the L-methionine pocket.

Belongs to the AdoMet synthase family. Homotetramer; dimer of dimers. Requires Mg(2+) as cofactor. K(+) is required as a cofactor.

The protein resides in the cytoplasm. The catalysed reaction is L-methionine + ATP + H2O = S-adenosyl-L-methionine + phosphate + diphosphate. The protein operates within amino-acid biosynthesis; S-adenosyl-L-methionine biosynthesis; S-adenosyl-L-methionine from L-methionine: step 1/1. Functionally, catalyzes the formation of S-adenosylmethionine (AdoMet) from methionine and ATP. The overall synthetic reaction is composed of two sequential steps, AdoMet formation and the subsequent tripolyphosphate hydrolysis which occurs prior to release of AdoMet from the enzyme. The protein is S-adenosylmethionine synthase of Cupriavidus metallidurans (strain ATCC 43123 / DSM 2839 / NBRC 102507 / CH34) (Ralstonia metallidurans).